The chain runs to 386 residues: NADPH-dependent alkenal/one oxidoreductase, chloroplastic (386 aa).

The protein belongs to the zinc-containing alcohol dehydrogenase family. Quinone oxidoreductase subfamily.

It is found in the plastid. The protein resides in the chloroplast. Functionally, reduces the double bond in short-chain unsaturated carbonyls. Acts preferentially on alpha,beta-unsaturated ketones rather on alpha,beta-unsaturated aldehydes. Has no activity with (E)-2-hexenal and (E)-2-pentenal. Contributes to detoxify stromal reactive carbonyls produced under oxidative stress. This chain is NADPH-dependent alkenal/one oxidoreductase, chloroplastic, found in Arabidopsis thaliana (Mouse-ear cress).